The following is a 2223-amino-acid chain: MKDSGSEMIKRDWVMKQKRRKLPSILDILDQKVDSSMAFDSPEYTSSSKPSKQRLKTDSTPERNSSKRKGNDGNYFECVICDLGGDLLCCDSCPRTYHTACLNPPLKRIPNGKWICPKCSPNSEALKPVNRLDAIAKRARTKTKKRNSKAGPKCERASQIYCSSIISGEQSSEKGKSISAEESKSTGKEVYSSPMDGCSTAELGHASADDRPDSSSHGEDDLGKPVIPTADLPSDAGLTLLSCEDLSESKLSDTEKTHEAPVEKLEHASSEIVENKTVAEMETGKGKRKKRKRELNDGESLERCKTDKKRAKKSLSKVGSSSQTTKSPESSKKKKKKNRVTLKSLSKPQSKTETPEKVKKLPKEERRAVRATNKSSSCLEDTNSLPVGNLQVHRVLGCRIQGLTKTSLCSALSDDLCSDNLQATDQRDSLVQDTNAELVVAEDRIDSSSETGKSSRDSRLRDKDMDDSALGTEGMVEVKEEMLSEDISNATLSRHVDDEDMKVSETHVSVERELLEEAHQETGEKSTVADEEIEEPVAAKTSDLIGETVSYEFLVKWVDKSNIHNTWISEAELKGLAKRKLENYKAKYGTAVINICEDKWKQPQRIVALRVSKEGNQEAYVKWTGLAYDECTWESLEEPILKHSSHLIDLFHQYEQKTLERNSKGNPTRERGEVVTLTEQPQELRGGALFAHQLEALNWLRRCWHKSKNVILADEMGLGKTVSASAFLSSLYFEFGVARPCLVLVPLSTMPNWLSEFSLWAPLLNVVEYHGSAKGRAIIRDYEWHAKNSTGTTKKPTSYKFNVLLTTYEMVLADSSHLRGVPWEVLVVDEGHRLKNSESKLFSLLNTFSFQHRVLLTGTPLQNNIGEMYNLLNFLQPSSFPSLSSFEERFHDLTSAEKVEELKKLVAPHMLRRLKKDAMQNIPPKTERMVPVELTSIQAEYYRAMLTKNYQILRNIGKGVAQQSMLNIVMQLRKVCNHPYLIPGTEPESGSLEFLHDMRIKASAKLTLLHSMLKVLHKEGHRVLIFSQMTKLLDILEDYLNIEFGPKTFERVDGSVAVADRQAAIARFNQDKNRFVFLLSTRACGLGINLATADTVIIYDSDFNPHADIQAMNRAHRIGQSKRLLVYRLVVRASVEERILQLAKKKLMLDQLFVNKSGSQKEFEDILRWGTEELFNDSAGENKKDTAESNGNLDVIMDLESKSRKKGGGLGDVYQDKCTEGNGKIVWDDIAIMKLLDRSNLQSASTDAADTELDNDMLGSVKPVEWNEETAEEQVGAESPALVTDDTGEPSSERKDDDVVNFTEENEWDRLLRMRWEKYQSEEEAALGRGKRLRKAVSYREAYAPHTSGPVNESGGEDEKEPEPELKKEYTPAGRALKEKFTKLRERQKNLIARRNSVEESLPSGNVDQVTEVANQDEESPTSMDLDDSKASQQCDAQKRKASSSDPKPDLLSQHHHGAECLPSLPPNNLPVLGLCAPNFTQSESSRRNYSRPGSRQNRPITGPHFPFNLPQTSNLVEREANDQEPPMGKLKPQNIKEEPFQQPLSNMDGWLPHRQFPPSGDFERPRSSGAAFADFQEKFPLLNLPFDDKLLPRFPFQPRTMGTSHQDIMANLSMRKRFEGTGHSMQDLFGGTPMPFLPNMKIPPMDPPVFNQQEKDLPPLGLDQFPSALSSIPENHRKVLENIMLRTGSGIGHVQKKKTRVDAWSEDELDSLWIGIRRHGYGNWETILRDPRLKFSKFKTPEYLAARWEEEQRKFLDSLSSLPSKSSRTDKSTKSSLFPGLPQGIMNRALHGKYATPPRFQSHLTDIKLGFGDLASPLPLFEPSDHLGFRSEHFPPMANLCTDNLPGEPSAGPSERAGTSTNIPNEKPFPLNSLGMGNLGSLGLDSLSSLNTLRAEEKRDAIKRGKLPLFLDMPLPQMLDSSNNVFLGRSANPSFLHPNRGLNPSNPMGRDIMGISSSENKLPHWLRNVVTVPTVKSPEPPTLPPTVSAIAQSVRVLYGEDSTTIPPFVIPEPPPPAPRDPRHSLRKKRKRKLHSSSQKTTDIGSSSHNAVESSSQGNPQTSATPPLPPPSLAGETSGSSQPKLPPHNLNSTEPLSSEAIIIPPPEEDSVIAAAPSEAPGPSLEGITGTTKSISLESQSSEPETINQDGDLDPETDEKVESERTPLHSDEKQEEQESENALNKQCEPIEAESQNTNAEEEAEAQEEDEESMKMVTGNSLSDD.

A disordered region spans residues 39–69 (FDSPEYTSSSKPSKQRLKTDSTPERNSSKRK). The segment covering 55–69 (LKTDSTPERNSSKRK) has biased composition (basic and acidic residues). The segment at 75 to 122 (YFECVICDLGGDLLCCDSCPRTYHTACLNPPLKRIPNGKWICPKCSPN) adopts a PHD-type zinc-finger fold. 4 stretches are compositionally biased toward basic and acidic residues: residues 173 to 187 (EKGK…KSTG), 207 to 223 (SADD…DDLG), 248 to 285 (ESKL…ETGK), and 294 to 305 (ELNDGESLERCK). Disordered regions lie at residues 173 to 235 (EKGK…LPSD), 248 to 381 (ESKL…CLED), and 441 to 474 (AEDR…GTEG). Positions 306–315 (TDKKRAKKSL) are enriched in basic residues. Residues 353–368 (ETPEKVKKLPKEERRA) are compositionally biased toward basic and acidic residues. The span at 372-381 (TNKSSSCLED) shows a compositional bias: polar residues. A compositionally biased stretch (basic and acidic residues) spans 441–466 (AEDRIDSSSETGKSSRDSRLRDKDMD). Chromo domains are found at residues 531–587 (EEIE…YKAK) and 601–663 (KQPQ…ERNS). The region spanning 701-878 (RRCWHKSKNV…YNLLNFLQPS (178 aa)) is the Helicase ATP-binding domain. Residue 714–721 (DEMGLGKT) coordinates ATP. The DEAH box motif lies at 829–832 (DEGH). The Nuclear localization signal signature appears at 902-909 (LKKLVAPH). One can recognise a Helicase C-terminal domain in the interval 1008–1167 (LLHSMLKVLH…GSQKEFEDIL (160 aa)). 6 disordered regions span residues 1268 to 1300 (EETA…DDVV), 1341 to 1380 (EAYA…LKEK), 1394 to 1463 (RRNS…ECLP), 1483 to 1511 (SESS…FNLP), 1760 to 1779 (LSSL…SSLF), and 2006 to 2223 (IPPF…LSDD). Basic and acidic residues predominate over residues 1363 to 1380 (EPELKKEYTPAGRALKEK). The stretch at 1375–1402 (RALKEKFTKLRERQKNLIARRNSVEESL) forms a coiled coil. Positions 1403-1414 (PSGNVDQVTEVA) are enriched in polar residues. A compositionally biased stretch (pro residues) spans 2009–2019 (FVIPEPPPPAP). Over residues 2025 to 2035 (SLRKKRKRKLH) the composition is skewed to basic residues. Composition is skewed to polar residues over residues 2039–2061 (QKTT…GNPQ), 2075–2096 (GETS…TEPL), and 2128–2148 (TGTT…TINQ). Basic and acidic residues predominate over residues 2157–2171 (DEKVESERTPLHSDE). A coiled-coil region spans residues 2189 to 2215 (IEAESQNTNAEEEAEAQEEDEESMKMV). Over residues 2198–2210 (AEEEAEAQEEDEE) the composition is skewed to acidic residues.

The protein belongs to the SNF2/RAD54 helicase family.

It is found in the nucleus. Functionally, chromatin-remodeling protein that binds DNA through histones and regulates gene transcription. May specifically recognize and bind trimethylated 'Lys-27' (H3K27me3) and non-methylated 'Lys-4' of histone H3. Probable chromatin remodeling factor. The chain is Protein CHROMATIN REMODELING 4 from Arabidopsis thaliana (Mouse-ear cress).